Here is a 427-residue protein sequence, read N- to C-terminus: Phosphomethylpyrimidine synthase (427 aa).

Residues Asn-66, Met-95, Tyr-124, His-163, 185–187, 226–229, and Glu-265 each bind substrate; these read SRG and DGLR. His-269 contributes to the Zn(2+) binding site. Tyr-292 lines the substrate pocket. Zn(2+) is bound at residue His-333. [4Fe-4S] cluster contacts are provided by Cys-409, Cys-412, and Cys-416.

Belongs to the ThiC family. Homodimer. [4Fe-4S] cluster serves as cofactor.

The catalysed reaction is 5-amino-1-(5-phospho-beta-D-ribosyl)imidazole + S-adenosyl-L-methionine = 4-amino-2-methyl-5-(phosphooxymethyl)pyrimidine + CO + 5'-deoxyadenosine + formate + L-methionine + 3 H(+). It functions in the pathway cofactor biosynthesis; thiamine diphosphate biosynthesis. Functionally, catalyzes the synthesis of the hydroxymethylpyrimidine phosphate (HMP-P) moiety of thiamine from aminoimidazole ribotide (AIR) in a radical S-adenosyl-L-methionine (SAM)-dependent reaction. The chain is Phosphomethylpyrimidine synthase from Syntrophus aciditrophicus (strain SB).